A 423-amino-acid chain; its full sequence is Diaminobutyrate--2-oxoglutarate transaminase (423 aa).

N6-(pyridoxal phosphate)lysine is present on lysine 267.

The protein belongs to the class-III pyridoxal-phosphate-dependent aminotransferase family. In terms of assembly, homohexamer. Pyridoxal 5'-phosphate serves as cofactor.

The catalysed reaction is L-2,4-diaminobutanoate + 2-oxoglutarate = L-aspartate 4-semialdehyde + L-glutamate. It functions in the pathway amine and polyamine biosynthesis; ectoine biosynthesis; L-ectoine from L-aspartate 4-semialdehyde: step 1/3. Functionally, catalyzes reversively the conversion of L-aspartate beta-semialdehyde (ASA) to L-2,4-diaminobutyrate (DABA) by transamination with L-glutamate. This is Diaminobutyrate--2-oxoglutarate transaminase (ectB) from Chromohalobacter salexigens (strain ATCC BAA-138 / DSM 3043 / CIP 106854 / NCIMB 13768 / 1H11).